The following is an 850-amino-acid chain: PH domain-containing protein YHR131C (850 aa).

A PH domain is found at 194-306 (RIHSDLVHRS…MYLSIGISVS (113 aa)). The span at 324–338 (RRRRRRRRRRRRHTH) shows a compositional bias: basic residues. Disordered regions lie at residues 324–348 (RRRR…GSFS), 406–428 (SAAS…SGCS), 451–494 (SSRT…GVPV), 583–659 (EASI…TDDS), and 793–850 (TTKD…QITA). Residues 406-416 (SAASGESSDNS) show a composition bias toward low complexity. Over residues 417–428 (TLGSTRSLSGCS) the composition is skewed to polar residues. The span at 479 to 489 (HHESSGGDHPE) shows a compositional bias: basic and acidic residues. Over residues 605-619 (ESATDLSQSSRSLCL) the composition is skewed to polar residues. Composition is skewed to acidic residues over residues 626–658 (INDD…DTDD) and 799–850 (DHGE…QITA).

The protein localises to the cytoplasm. The sequence is that of PH domain-containing protein YHR131C from Saccharomyces cerevisiae (strain ATCC 204508 / S288c) (Baker's yeast).